The primary structure comprises 78 residues: Acyl carrier protein (78 aa).

A Carrier domain is found at 2–77; the sequence is SNIEERVKKI…AAIDYVTSNA (76 aa). An O-(pantetheine 4'-phosphoryl)serine modification is found at Ser37.

This sequence belongs to the acyl carrier protein (ACP) family. In terms of processing, 4'-phosphopantetheine is transferred from CoA to a specific serine of apo-ACP by AcpS. This modification is essential for activity because fatty acids are bound in thioester linkage to the sulfhydryl of the prosthetic group.

Its subcellular location is the cytoplasm. Its pathway is lipid metabolism; fatty acid biosynthesis. Carrier of the growing fatty acid chain in fatty acid biosynthesis. The polypeptide is Acyl carrier protein (Vibrio cholerae serotype O1 (strain ATCC 39315 / El Tor Inaba N16961)).